The following is a 360-amino-acid chain: Glutamine synthetase (360 aa).

The GS beta-grasp domain maps to 26-105 (IMAEYIWIDA…VLSECWNADG (80 aa)). The GS catalytic domain occupies 112-360 (YRHECAKLME…METIYGSVDN (249 aa)).

Belongs to the glutamine synthetase family. As to quaternary structure, homooctamer.

It localises to the cytoplasm. The catalysed reaction is L-glutamate + NH4(+) + ATP = L-glutamine + ADP + phosphate + H(+). This is Glutamine synthetase (GLN1) from Colletotrichum gloeosporioides (Anthracnose fungus).